Consider the following 67-residue polypeptide: Large ribosomal subunit protein bL35 (67 aa).

It belongs to the bacterial ribosomal protein bL35 family.

The polypeptide is Large ribosomal subunit protein bL35 (Rhizobium johnstonii (strain DSM 114642 / LMG 32736 / 3841) (Rhizobium leguminosarum bv. viciae)).